We begin with the raw amino-acid sequence, 395 residues long: Major outer membrane porin, serovar F (395 aa).

The N-terminal stretch at 1-22 (MKKLLKSVLVFAALSSASSLQA) is a signal peptide.

Belongs to the chlamydial porin (CP) (TC 1.B.2) family. Part of a disulfide cross-linked outer membrane complex (COMC) composed of the major outer membrane porin (MOMP), the small cysteine-rich protein (OmcA) and the large cysteine-rich periplasmic protein (OmcB).

It localises to the cell outer membrane. In terms of biological role, in elementary bodies (EBs, the infectious stage, which is able to survive outside the host cell) provides the structural integrity of the outer envelope through disulfide cross-links with the small cysteine-rich protein and the large cysteine-rich periplasmic protein. It has been described in publications as the Sarkosyl-insoluble COMC (Chlamydia outer membrane complex), and serves as the functional equivalent of peptidoglycan. Its function is as follows. Permits diffusion of specific solutes through the outer membrane. The chain is Major outer membrane porin, serovar F (ompA) from Chlamydia trachomatis.